Here is a 120-residue protein sequence, read N- to C-terminus: NAD(P)H-quinone oxidoreductase subunit 3, chloroplastic (120 aa).

3 helical membrane-spanning segments follow: residues 9-29, 64-84, and 88-108; these read IFWA…LISG, MFAL…PWAM, and VLGV…IVGS.

Belongs to the complex I subunit 3 family. As to quaternary structure, NDH is composed of at least 16 different subunits, 5 of which are encoded in the nucleus.

The protein localises to the plastid. It is found in the chloroplast thylakoid membrane. It carries out the reaction a plastoquinone + NADH + (n+1) H(+)(in) = a plastoquinol + NAD(+) + n H(+)(out). The catalysed reaction is a plastoquinone + NADPH + (n+1) H(+)(in) = a plastoquinol + NADP(+) + n H(+)(out). NDH shuttles electrons from NAD(P)H:plastoquinone, via FMN and iron-sulfur (Fe-S) centers, to quinones in the photosynthetic chain and possibly in a chloroplast respiratory chain. The immediate electron acceptor for the enzyme in this species is believed to be plastoquinone. Couples the redox reaction to proton translocation, and thus conserves the redox energy in a proton gradient. The chain is NAD(P)H-quinone oxidoreductase subunit 3, chloroplastic from Buxus microphylla (Littleleaf boxwood).